A 168-amino-acid chain; its full sequence is Photosystem I assembly protein Ycf3 (168 aa).

3 TPR repeats span residues 35–68, 72–105, and 120–153; these read AFTYYRDGMSAQSEGNYAEALQNYYEATRLEIDP, SYILYNIGLIHTSNGEHTKALEYYFRAIERNPFL, and GEQAIRQGDSEIAEAWSDQAAEYWKQAIALTPGN.

This sequence belongs to the Ycf3 family.

The protein localises to the plastid. Its subcellular location is the chloroplast thylakoid membrane. Its function is as follows. Essential for the assembly of the photosystem I (PSI) complex. May act as a chaperone-like factor to guide the assembly of the PSI subunits. The polypeptide is Photosystem I assembly protein Ycf3 (Calycanthus floridus var. glaucus (Eastern sweetshrub)).